The primary structure comprises 423 residues: Phosphoribosylamine--glycine ligase (423 aa).

One can recognise an ATP-grasp domain in the interval 107–312; it reads KDLCARYDIP…LLPILYATAT (206 aa). ATP is bound at residue 133 to 193; it reads VRAQGAPIVI…EAFLDGEEAS (61 aa). Residues Glu-282 and Asn-284 each coordinate Mg(2+).

The protein belongs to the GARS family. It depends on Mg(2+) as a cofactor. Mn(2+) serves as cofactor.

The enzyme catalyses 5-phospho-beta-D-ribosylamine + glycine + ATP = N(1)-(5-phospho-beta-D-ribosyl)glycinamide + ADP + phosphate + H(+). It functions in the pathway purine metabolism; IMP biosynthesis via de novo pathway; N(1)-(5-phospho-D-ribosyl)glycinamide from 5-phospho-alpha-D-ribose 1-diphosphate: step 2/2. The protein is Phosphoribosylamine--glycine ligase of Agrobacterium fabrum (strain C58 / ATCC 33970) (Agrobacterium tumefaciens (strain C58)).